The chain runs to 62 residues: Mu-conotoxin Lt5d (62 aa).

Positions 1–22 (MRCLPVFIILLLLIPSAPSVDA) are cleaved as a signal peptide. Positions 23-48 (QPTTKDDVPLASLHDNAKRALQMFWN) are excised as a propeptide.

The protein belongs to the conotoxin T superfamily. In terms of processing, contains 2 disulfide bonds that can be either 'C1-C3, C2-C4' or 'C1-C4, C2-C3', since these disulfide connectivities have been observed for conotoxins with cysteine framework V (for examples, see AC P0DQQ7 and AC P81755). In terms of tissue distribution, expressed by the venom duct.

Its subcellular location is the secreted. Mu-conotoxins block voltage-gated sodium channels (Nav). This toxin inhibits tetrodotoxin(TTX)-sensitive sodium channels, but does not affect TTX-resistant sodium channels. Reduces the amplitude of currents without changing the activation and inactivation kinetics of currents. The polypeptide is Mu-conotoxin Lt5d (Conus litteratus (Lettered cone)).